Consider the following 26-residue polypeptide: Coenzyme PQQ synthesis protein A (26 aa).

A cross-link (pyrroloquinoline quinone (Glu-Tyr)) is located at residues 16 to 20; it reads EINSY.

Belongs to the PqqA family.

The protein operates within cofactor biosynthesis; pyrroloquinoline quinone biosynthesis. Required for coenzyme pyrroloquinoline quinone (PQQ) biosynthesis. PQQ is probably formed by cross-linking a specific glutamate to a specific tyrosine residue and excising these residues from the peptide. The chain is Coenzyme PQQ synthesis protein A from Gluconacetobacter diazotrophicus (strain ATCC 49037 / DSM 5601 / CCUG 37298 / CIP 103539 / LMG 7603 / PAl5).